Here is a 351-residue protein sequence, read N- to C-terminus: Ion-translocating oxidoreductase complex subunit D (351 aa).

4 consecutive transmembrane segments (helical) span residues 18 to 38, 40 to 60, 87 to 107, and 121 to 141; these read IMLLVILACIPGIIAQTYFFG, GSLIQVMLAMITALLAEGAVL, LPPLAPWWMIVLGTLFAIVIA, and PAMVGYVVLLISFPVQMTSWL. At Thr-185 the chain carries FMN phosphoryl threonine. A run of 5 helical transmembrane segments spans residues 211–231, 241–261, 264–284, 298–318, and 321–341; these read VLAGLGWQWVNTGFLVGGLLL, IPVSFLLALGGCAAVSWMIAP, FASPMLHLFSGATMLGAFFIA, LIFGALIGILVWLIRVYGGYP, and VAFAVLLANITVPLIDHYTQP.

The protein belongs to the NqrB/RnfD family. In terms of assembly, the complex is composed of six subunits: RnfA, RnfB, RnfC, RnfD, RnfE and RnfG. The cofactor is FMN.

It localises to the cell inner membrane. In terms of biological role, part of a membrane-bound complex that couples electron transfer with translocation of ions across the membrane. This is Ion-translocating oxidoreductase complex subunit D from Yersinia pestis.